Reading from the N-terminus, the 145-residue chain is MATWALLLLAAMLLGNPGLVFSRLSPEYYDLARAHLRDEEKSCPCLAQEGPQGDLLTKTQELGRDYRTCLTIVQKLKKMVDKPTQRSVSNAATRVCRTGRSRWRDVCRNFMRRYQSRVTQGLVAGETAQQICEDLRLCIPSTGPL.

Residues 1 to 22 (MATWALLLLAAMLLGNPGLVFS) form the signal peptide. The Saposin B-type domain occupies 62-142 (LGRDYRTCLT…EDLRLCIPST (81 aa)). 2 disulfides stabilise this stretch: cysteine 69–cysteine 132 and cysteine 96–cysteine 107.

In terms of processing, a 9 kDa form is produced by proteolytic processing of a 15 kDa protein. As to expression, expressed in natural killer and T-cells.

It localises to the secreted. In terms of biological role, antimicrobial protein that kills intracellular pathogens. Active against a broad range of microbes, including Gram-positive and Gram-negative bacteria, fungi, and parasites. Kills Mycobacterium tuberculosis. The polypeptide is Granulysin (GNLY) (Homo sapiens (Human)).